The primary structure comprises 1257 residues: Bifunctional autolysin (1257 aa).

The first 29 residues, 1–29 (MAKKFNYKLPSMVALTLVGSAVTAHQVQA), serve as a signal peptide directing secretion. Residues 99-137 (QVNGDTRATQSTTSNNAKPVTKSTNTTAPKTNNNVTSAG) are compositionally biased toward polar residues. 3 disordered regions span residues 99–150 (QVNG…NSEN), 173–217 (AAPK…KYKP), and 417–441 (TQST…PSTG). 2 stretches are compositionally biased toward low complexity: residues 173–208 (AAPK…AAAP) and 419–440 (STTT…TPST). Residues 197–776 (ASAQPRSAAA…AVAQPKTAVK (580 aa)) form an N-acetylmuramoyl-L-alanine amidase region. GW domains follow at residues 444-518 (TVAA…YNTA), 520-594 (SPVN…DTAK), 613-687 (TVSS…YNNA), 689-763 (SPVN…VPAA), 785-860 (TTQT…VQNL), 862-937 (KEVK…APTA), and 944-1018 (AAKD…KELI). Residues 777 to 1257 (AYAVTKPQTT…GKYFDIPQYK (481 aa)) form an endo-beta-N-acetylglucosaminidase region.

The protein in the N-terminal section; belongs to the N-acetylmuramoyl-L-alanine amidase 2 family. In the C-terminal section; belongs to the glycosyl hydrolase 73 family. In terms of assembly, oligomer; forms a ring structure at the cell surface which is important for efficient partitioning of daughter cells after cell division. Undergoes proteolytic processing to generate the two extracellular lytic enzymes, probably at the septal region on the cell surface.

The protein localises to the secreted. The enzyme catalyses Hydrolyzes the link between N-acetylmuramoyl residues and L-amino acid residues in certain cell-wall glycopeptides.. It carries out the reaction an N(4)-(oligosaccharide-(1-&gt;3)-[oligosaccharide-(1-&gt;6)]-beta-D-Man-(1-&gt;4)-beta-D-GlcNAc-(1-&gt;4)-alpha-D-GlcNAc)-L-asparaginyl-[protein] + H2O = an oligosaccharide-(1-&gt;3)-[oligosaccharide-(1-&gt;6)]-beta-D-Man-(1-&gt;4)-D-GlcNAc + N(4)-(N-acetyl-beta-D-glucosaminyl)-L-asparaginyl-[protein]. Functionally, endohydrolysis of the di-N-acetylchitobiosyl unit in high-mannose glycopeptides and glycoproteins containing the -[(Man)5(GlcNAc)2]-Asn structure. One N-acetyl-D-glucosamine residue remains attached to the protein; the rest of the oligosaccharide is released intact. Cleaves the peptidoglycan connecting the daughter cells at the end of the cell division cycle, resulting in the separation of the two newly divided cells. Acts as an autolysin in penicillin-induced lysis. The polypeptide is Bifunctional autolysin (atl) (Staphylococcus aureus (strain MRSA252)).